The chain runs to 540 residues: Thiamine biosynthetic bifunctional enzyme (540 aa).

The segment at 1–238 is thiamine-phosphate synthase; that stretch reads MVFTKEEVDY…LDATRYQFVE (238 aa). 4-amino-2-methyl-5-(diphosphooxymethyl)pyrimidine contacts are provided by residues 43–47 and Asn-75; that span reads QIREK. Positions 76 and 95 each coordinate Mg(2+). Ser-114 provides a ligand contact to 4-amino-2-methyl-5-(diphosphooxymethyl)pyrimidine. 2-[(2R,5Z)-2-carboxy-4-methylthiazol-5(2H)-ylidene]ethyl phosphate is bound at residue 143–145; it reads TST. Lys-146 contributes to the 4-amino-2-methyl-5-(diphosphooxymethyl)pyrimidine binding site. 2-[(2R,5Z)-2-carboxy-4-methylthiazol-5(2H)-ylidene]ethyl phosphate-binding positions include Gly-181 and 209-210; that span reads VS. Residues 239-540 form a hydroxyethylthiazole kinase region; the sequence is CELNNTFPTT…KWSASLKKFK (302 aa). Met-290 serves as a coordination point for 5-(2-hydroxyethyl)-4-methylthiazole. The ATP site is built by Lys-365 and Thr-415. Ala-462 serves as a coordination point for 5-(2-hydroxyethyl)-4-methylthiazole. The Proton acceptor; for hydroxyethylthiazole kinase activity role is filled by Cys-465.

In the N-terminal section; belongs to the thiamine-phosphate synthase family. It in the C-terminal section; belongs to the Thz kinase family. Homooctamer. Mg(2+) serves as cofactor.

The enzyme catalyses 2-[(2R,5Z)-2-carboxy-4-methylthiazol-5(2H)-ylidene]ethyl phosphate + 4-amino-2-methyl-5-(diphosphooxymethyl)pyrimidine + 2 H(+) = thiamine phosphate + CO2 + diphosphate. It carries out the reaction 2-(2-carboxy-4-methylthiazol-5-yl)ethyl phosphate + 4-amino-2-methyl-5-(diphosphooxymethyl)pyrimidine + 2 H(+) = thiamine phosphate + CO2 + diphosphate. The catalysed reaction is 4-methyl-5-(2-phosphooxyethyl)-thiazole + 4-amino-2-methyl-5-(diphosphooxymethyl)pyrimidine + H(+) = thiamine phosphate + diphosphate. It catalyses the reaction 5-(2-hydroxyethyl)-4-methylthiazole + ATP = 4-methyl-5-(2-phosphooxyethyl)-thiazole + ADP + H(+). The protein operates within cofactor biosynthesis; thiamine diphosphate biosynthesis; 4-methyl-5-(2-phosphoethyl)-thiazole from 5-(2-hydroxyethyl)-4-methylthiazole: step 1/1. It functions in the pathway cofactor biosynthesis; thiamine diphosphate biosynthesis; thiamine phosphate from 4-amino-2-methyl-5-diphosphomethylpyrimidine and 4-methyl-5-(2-phosphoethyl)-thiazole: step 1/1. Functionally, essential for thiamine biosynthesis. The kinase activity is involved in the salvage synthesis of TH-P from the thiazole. In terms of biological role, condenses 4-methyl-5-(beta-hydroxyethyl)thiazole monophosphate (THZ-P) and 2-methyl-4-amino-5-hydroxymethyl pyrimidine pyrophosphate (HMP-PP) to form thiamine monophosphate (TMP). The sequence is that of Thiamine biosynthetic bifunctional enzyme (THI6) from Saccharomyces cerevisiae (strain ATCC 204508 / S288c) (Baker's yeast).